The following is a 172-amino-acid chain: 3-phenylpropionate/cinnamic acid dioxygenase subunit beta (172 aa).

Belongs to the bacterial ring-hydroxylating dioxygenase beta subunit family. In terms of assembly, this dioxygenase system consists of four proteins: the two subunits of the hydroxylase component (HcaE and HcaF), a ferredoxin (HcaC) and a ferredoxin reductase (HcaD).

The enzyme catalyses 3-phenylpropanoate + NADH + O2 + H(+) = 3-(cis-5,6-dihydroxycyclohexa-1,3-dien-1-yl)propanoate + NAD(+). It catalyses the reaction (E)-cinnamate + NADH + O2 + H(+) = (2E)-3-(cis-5,6-dihydroxycyclohexa-1,3-dien-1-yl)prop-2-enoate + NAD(+). It functions in the pathway aromatic compound metabolism; 3-phenylpropanoate degradation. Its function is as follows. Part of the multicomponent 3-phenylpropionate dioxygenase. Converts 3-phenylpropionic acid (PP) and cinnamic acid (CI) into 3-phenylpropionate-dihydrodiol (PP-dihydrodiol) and cinnamic acid-dihydrodiol (CI-dihydrodiol), respectively. In Escherichia coli O157:H7, this protein is 3-phenylpropionate/cinnamic acid dioxygenase subunit beta.